The sequence spans 428 residues: Nuclear hormone receptor family member nhr-44 (428 aa).

Positions 21-98 (SEKCLVCFQP…LGMKPDNIQR (78 aa)) form a DNA-binding region, nuclear receptor. NR C4-type zinc fingers lie at residues 24-44 (CLVC…CRAC) and 61-86 (CREG…SDKC). The NR LBD domain occupies 181 to 427 (SLEQLAFGLQ…LSHPEMFQFS (247 aa)).

It belongs to the nuclear hormone receptor family.

The protein localises to the nucleus. Its function is as follows. Orphan nuclear receptor. In Caenorhabditis elegans, this protein is Nuclear hormone receptor family member nhr-44 (nhr-44).